Here is a 64-residue protein sequence, read N- to C-terminus: Large ribosomal subunit protein bL35 (64 aa).

The protein belongs to the bacterial ribosomal protein bL35 family.

This chain is Large ribosomal subunit protein bL35, found in Desulforamulus reducens (strain ATCC BAA-1160 / DSM 100696 / MI-1) (Desulfotomaculum reducens).